We begin with the raw amino-acid sequence, 360 residues long: 3-isopropylmalate dehydrogenase (360 aa).

76–89 provides a ligand contact to NAD(+); that stretch reads GPKWDKIERDIRPE. Substrate-binding residues include R96, R106, R134, and D224. Residues D224, D248, and D252 each contribute to the Mg(2+) site. 282 to 294 provides a ligand contact to NAD(+); the sequence is GSAPDIAGQGIAN.

It belongs to the isocitrate and isopropylmalate dehydrogenases family. LeuB type 1 subfamily. In terms of assembly, homodimer. Requires Mg(2+) as cofactor. Mn(2+) serves as cofactor.

It localises to the cytoplasm. It catalyses the reaction (2R,3S)-3-isopropylmalate + NAD(+) = 4-methyl-2-oxopentanoate + CO2 + NADH. The protein operates within amino-acid biosynthesis; L-leucine biosynthesis; L-leucine from 3-methyl-2-oxobutanoate: step 3/4. In terms of biological role, catalyzes the oxidation of 3-carboxy-2-hydroxy-4-methylpentanoate (3-isopropylmalate) to 3-carboxy-4-methyl-2-oxopentanoate. The product decarboxylates to 4-methyl-2 oxopentanoate. This Pseudomonas fluorescens (strain ATCC BAA-477 / NRRL B-23932 / Pf-5) protein is 3-isopropylmalate dehydrogenase.